The sequence spans 260 residues: Hydroxyacylglutathione hydrolase (260 aa).

7 residues coordinate Zn(2+): His-55, His-57, Asp-59, His-60, His-116, Asp-133, and His-171.

It belongs to the metallo-beta-lactamase superfamily. Glyoxalase II family. As to quaternary structure, monomer. Requires Zn(2+) as cofactor.

The catalysed reaction is an S-(2-hydroxyacyl)glutathione + H2O = a 2-hydroxy carboxylate + glutathione + H(+). It participates in secondary metabolite metabolism; methylglyoxal degradation; (R)-lactate from methylglyoxal: step 2/2. Functionally, thiolesterase that catalyzes the hydrolysis of S-D-lactoyl-glutathione to form glutathione and D-lactic acid. The protein is Hydroxyacylglutathione hydrolase of Shewanella loihica (strain ATCC BAA-1088 / PV-4).